A 323-amino-acid polypeptide reads, in one-letter code: Porphobilinogen deaminase (323 aa).

Cys-240 carries the post-translational modification S-(dipyrrolylmethanemethyl)cysteine.

The protein belongs to the HMBS family. In terms of assembly, monomer. Dipyrromethane serves as cofactor.

The enzyme catalyses 4 porphobilinogen + H2O = hydroxymethylbilane + 4 NH4(+). It functions in the pathway porphyrin-containing compound metabolism; protoporphyrin-IX biosynthesis; coproporphyrinogen-III from 5-aminolevulinate: step 2/4. Tetrapolymerization of the monopyrrole PBG into the hydroxymethylbilane pre-uroporphyrinogen in several discrete steps. The sequence is that of Porphobilinogen deaminase from Sulfurovum sp. (strain NBC37-1).